The chain runs to 345 residues: Fructose-1,6-bisphosphatase class 1 (345 aa).

Positions 90, 109, 111, and 112 each coordinate Mg(2+). Residues 112 to 115 and Asn200 each bind substrate; that span reads DGSS. Glu272 serves as a coordination point for Mg(2+).

The protein belongs to the FBPase class 1 family. In terms of assembly, homotetramer. Mg(2+) is required as a cofactor.

It is found in the cytoplasm. The catalysed reaction is beta-D-fructose 1,6-bisphosphate + H2O = beta-D-fructose 6-phosphate + phosphate. The protein operates within carbohydrate biosynthesis; gluconeogenesis. The polypeptide is Fructose-1,6-bisphosphatase class 1 (Bradyrhizobium diazoefficiens (strain JCM 10833 / BCRC 13528 / IAM 13628 / NBRC 14792 / USDA 110)).